We begin with the raw amino-acid sequence, 96 residues long: Co-chaperonin GroES (96 aa).

The protein belongs to the GroES chaperonin family. Heptamer of 7 subunits arranged in a ring. Interacts with the chaperonin GroEL.

It is found in the cytoplasm. In terms of biological role, together with the chaperonin GroEL, plays an essential role in assisting protein folding. The GroEL-GroES system forms a nano-cage that allows encapsulation of the non-native substrate proteins and provides a physical environment optimized to promote and accelerate protein folding. GroES binds to the apical surface of the GroEL ring, thereby capping the opening of the GroEL channel. This chain is Co-chaperonin GroES, found in Leptospira interrogans serogroup Icterohaemorrhagiae serovar copenhageni (strain Fiocruz L1-130).